The chain runs to 371 residues: Transmembrane protein 229A (371 aa).

A disordered region spans residues Met-1–Gln-30. 6 helical membrane-spanning segments follow: residues Leu-51 to Val-71, Ala-117 to Gly-137, Phe-235 to Val-255, Leu-269 to Leu-289, Val-301 to Met-321, and Leu-334 to Tyr-354.

It belongs to the TMEM229 family.

The protein resides in the membrane. The chain is Transmembrane protein 229A (Tmem229a) from Mus musculus (Mouse).